The chain runs to 416 residues: Multifunctional CCA protein (416 aa).

The ATP site is built by Gly-8 and Arg-11. CTP-binding residues include Gly-8 and Arg-11. Mg(2+) is bound by residues Asp-21 and Asp-23. Positions 91, 137, and 140 each coordinate ATP. Arg-91, Arg-137, and Arg-140 together coordinate CTP. Residues 228–329 enclose the HD domain; it reads TGLHTMLVLA…IKLFDKADFW (102 aa).

The protein belongs to the tRNA nucleotidyltransferase/poly(A) polymerase family. Bacterial CCA-adding enzyme type 1 subfamily. In terms of assembly, monomer. Can also form homodimers and oligomers. Mg(2+) is required as a cofactor. It depends on Ni(2+) as a cofactor.

The enzyme catalyses a tRNA precursor + 2 CTP + ATP = a tRNA with a 3' CCA end + 3 diphosphate. It catalyses the reaction a tRNA with a 3' CCA end + 2 CTP + ATP = a tRNA with a 3' CCACCA end + 3 diphosphate. Catalyzes the addition and repair of the essential 3'-terminal CCA sequence in tRNAs without using a nucleic acid template. Adds these three nucleotides in the order of C, C, and A to the tRNA nucleotide-73, using CTP and ATP as substrates and producing inorganic pyrophosphate. tRNA 3'-terminal CCA addition is required both for tRNA processing and repair. Also involved in tRNA surveillance by mediating tandem CCA addition to generate a CCACCA at the 3' terminus of unstable tRNAs. While stable tRNAs receive only 3'-terminal CCA, unstable tRNAs are marked with CCACCA and rapidly degraded. This chain is Multifunctional CCA protein, found in Shewanella sp. (strain ANA-3).